Here is a 410-residue protein sequence, read N- to C-terminus: uncharacterized protein (410 aa).

H87 provides a ligand contact to Zn(2+). Residue D89 is part of the active site. D120 is a Zn(2+) binding site. The active-site Proton acceptor is the E154. The Zn(2+) site is built by E155, D184, and H387.

It belongs to the peptidase M20A family. It depends on Zn(2+) as a cofactor. Requires Co(2+) as cofactor.

This is an uncharacterized protein from Methanocaldococcus jannaschii (strain ATCC 43067 / DSM 2661 / JAL-1 / JCM 10045 / NBRC 100440) (Methanococcus jannaschii).